We begin with the raw amino-acid sequence, 202 residues long: 3-isopropylmalate dehydratase small subunit (202 aa).

Belongs to the LeuD family. LeuD type 1 subfamily. In terms of assembly, heterodimer of LeuC and LeuD.

It catalyses the reaction (2R,3S)-3-isopropylmalate = (2S)-2-isopropylmalate. Its pathway is amino-acid biosynthesis; L-leucine biosynthesis; L-leucine from 3-methyl-2-oxobutanoate: step 2/4. Catalyzes the isomerization between 2-isopropylmalate and 3-isopropylmalate, via the formation of 2-isopropylmaleate. This chain is 3-isopropylmalate dehydratase small subunit, found in Buchnera aphidicola subsp. Pemphigus spyrothecae.